We begin with the raw amino-acid sequence, 331 residues long: UDP-glucose 4-epimerase (331 aa).

Residues 11-12, 31-36, 51-52, 73-77, Asn92, Thr117, Tyr141, Lys145, and Phe169 contribute to the NAD(+) site; these read YI, DNLITG, DI, and FAAFS. Residues Thr117 and Tyr141 each contribute to the substrate site. The active-site Proton acceptor is Tyr141. Substrate-binding positions include Asn170, 189-190, 206-208, Arg221, and 282-285; these read HI, QIY, and RAGD.

Belongs to the NAD(P)-dependent epimerase/dehydratase family. Homodimer. The cofactor is NAD(+).

It carries out the reaction UDP-alpha-D-glucose = UDP-alpha-D-galactose. The protein operates within carbohydrate metabolism; galactose metabolism. The polypeptide is UDP-glucose 4-epimerase (galE) (Lacticaseibacillus casei (Lactobacillus casei)).